We begin with the raw amino-acid sequence, 98 residues long: MKINQPAVAGTLESGDVMIRIAPLDTQDIDLQINSSVEKQFGDAIRTTILEVLARYNVRGVQLNVDDKGALDCILRARLEALLARASGIPALPWEDCQ.

An O-(phosphoribosyl dephospho-coenzyme A)serine modification is found at S14.

Belongs to the CitD family. As to quaternary structure, oligomer with a subunit composition of (alpha,beta,gamma)6.

It is found in the cytoplasm. Functionally, covalent carrier of the coenzyme of citrate lyase. In Escherichia coli O81 (strain ED1a), this protein is Citrate lyase acyl carrier protein.